A 130-amino-acid chain; its full sequence is Small ribosomal subunit protein uS9 (130 aa).

Residues 105 to 130 (TRDPRMKERKKYGLHKARKAPQYSKR) form a disordered region. Over residues 111–130 (KERKKYGLHKARKAPQYSKR) the composition is skewed to basic residues.

The protein belongs to the universal ribosomal protein uS9 family.

The protein is Small ribosomal subunit protein uS9 of Syntrophomonas wolfei subsp. wolfei (strain DSM 2245B / Goettingen).